Reading from the N-terminus, the 1014-residue chain is Calcium-transporting ATPase 2, plasma membrane-type (1014 aa).

An N-acetylmethionine modification is found at methionine 1. The Cytoplasmic portion of the chain corresponds to 1-160; the sequence is MESYLNENFD…NKFAESEMRG (160 aa). Residues 20–31 form an interaction with calmodulin region; the sequence is VLEKWRNLCGVV. The residue at position 45 (serine 45) is a Phosphoserine; by CPK1. The helical transmembrane segment at 161–181 threads the bilayer; it reads FWVFVWEALQDMTLMILGVCA. Over 182–199 the chain is Lumenal; that stretch reads FVSLIVGIATEGWPKGSH. The chain crosses the membrane as a helical span at residues 200-220; that stretch reads DGLGIAASILLVVFVTATSDY. The Cytoplasmic segment spans residues 221 to 348; sequence RQSLQFRDLD…DDETPLQVKL (128 aa). Residues 349–368 traverse the membrane as a helical segment; the sequence is NGVATIIGKIGLFFAVVTFA. Over 369–398 the chain is Lumenal; that stretch reads VLVQGMFMRKLSTGTHWVWSGDEALELLEY. A helical membrane pass occupies residues 399–416; it reads FAIAVTIVVVAVPEGLPL. Residues 417 to 810 are Cytoplasmic-facing; the sequence is AVTLSLAFAM…KWGRSVYINI (394 aa). Aspartate 454 acts as the 4-aspartylphosphate intermediate in catalysis. Aspartate 755 and aspartate 759 together coordinate Mg(2+). The chain crosses the membrane as a helical span at residues 811-829; it reads QKFVQFQLTVNVVALVVNF. At 830–840 the chain is on the lumenal side; it reads SSACLTGSAPL. The chain crosses the membrane as a helical span at residues 841-861; sequence TAVQLLWVNMIMDTLGALALA. At 862–881 the chain is on the cytoplasmic side; the sequence is TEPPNDELMKRLPVGRRGNF. Residues 882-904 form a helical membrane-spanning segment; that stretch reads ITNAMWRNILGQAVYQFIVIWIL. Over 905–916 the chain is Lumenal; sequence QAKGKAMFGLDG. A helical transmembrane segment spans residues 917–938; that stretch reads PDSTLMLNTLIFNCFVFCQVFN. Residues 939 to 956 lie on the Cytoplasmic side of the membrane; it reads EISSREMEEIDVFKGILD. The helical transmembrane segment at 957 to 978 threads the bilayer; the sequence is NYVFVVVIGATVFFQIIIIEFL. At 979–988 the chain is on the lumenal side; it reads GTFASTTPLT. The helical transmembrane segment at 989–1010 threads the bilayer; the sequence is ITQWIFSIFIGFLGMPIAAGLK. Residues 1011–1014 are Cytoplasmic-facing; that stretch reads TIPV.

This sequence belongs to the cation transport ATPase (P-type) (TC 3.A.3) family. Type IIB subfamily.

It is found in the endoplasmic reticulum membrane. It catalyses the reaction Ca(2+)(in) + ATP + H2O = Ca(2+)(out) + ADP + phosphate + H(+). Activated by calmodulin. In terms of biological role, this magnesium-dependent enzyme catalyzes the hydrolysis of ATP coupled with the translocation of calcium from the cytosol into the endoplasmic reticulum. This Arabidopsis thaliana (Mouse-ear cress) protein is Calcium-transporting ATPase 2, plasma membrane-type (ACA2).